A 154-amino-acid chain; its full sequence is MAPARAGCCALLLLLLGLWVAEIPVSAKPKDMTSSQWLKTQHMQPSPQACNSAMNNINKYTEQCKDLNTFLHELFSSVATTCQTPNIACKNSRKNCHQSHGPMSLTMCELTSGKYPNCRYKEKHLNAPYIAACDPPQQGDPGYPLVPVHLDKVV.

A signal peptide spans 1–27; that stretch reads MAPARAGCCALLLLLLGLWVAEIPVSA. His-42 (proton acceptor) is an active-site residue. Cystine bridges form between Cys-64–Cys-118, Cys-82–Cys-133, and Cys-89–Cys-96. Substrate contacts are provided by residues 65–69 and Lys-90; that span reads KDLNT. His-149 functions as the Proton donor in the catalytic mechanism.

The protein belongs to the pancreatic ribonuclease family.

It localises to the secreted. Its function is as follows. Has a low ribonuclease activity. The chain is Ribonuclease 8 (RNASE8) from Pongo pygmaeus (Bornean orangutan).